A 275-amino-acid chain; its full sequence is Pyrroline-5-carboxylate reductase (275 aa).

Belongs to the pyrroline-5-carboxylate reductase family.

It is found in the cytoplasm. The catalysed reaction is L-proline + NADP(+) = (S)-1-pyrroline-5-carboxylate + NADPH + 2 H(+). The enzyme catalyses L-proline + NAD(+) = (S)-1-pyrroline-5-carboxylate + NADH + 2 H(+). It functions in the pathway amino-acid biosynthesis; L-proline biosynthesis; L-proline from L-glutamate 5-semialdehyde: step 1/1. Catalyzes the reduction of 1-pyrroline-5-carboxylate (PCA) to L-proline. The polypeptide is Pyrroline-5-carboxylate reductase (Pasteurella multocida (strain Pm70)).